The primary structure comprises 404 residues: MKLPIYFDYSATTPVDKRVAEKMMQYMTNDGHFGNPASRSHKFGWQAEEAVDIARNQIAELINADPREIVFTSGATESNNLAIKGAANFYNKKGKHIITCKTEHKAVLDTCRELERQGFEVTYLDPEENGLIDLNKLNDAMRDDTILVSIMQVNNEIGVIQDISEIGEMCRARKIVFHVDAAQSAGKINIDMQALKVDLMSISAHKMYGPKGIGALYVSRKPRIRLEAQTHGGGHERGMRSGTLATHQIVGMGEACRLAKEEMAQDQAHVTAMRDRLWAGLNSMEQVFINGDADKRYPGNLNVSFNFVEGESLIMALKDLAVSSGSACTSASLEPSYVLRALGLNDEMAHSSIRFSFGRFTTTEEIDYAIELIKGAIGHLRDMSPLWEMFKDGIDLDSIEWAAH.

Pyridoxal 5'-phosphate-binding positions include Ala-75 to Thr-76, Asn-155, Gln-183, and Ser-203 to His-205. An N6-(pyridoxal phosphate)lysine modification is found at Lys-206. A pyridoxal 5'-phosphate-binding site is contributed by Thr-243. Residue Cys-328 is the Cysteine persulfide intermediate of the active site. Cys-328 provides a ligand contact to [2Fe-2S] cluster.

The protein belongs to the class-V pyridoxal-phosphate-dependent aminotransferase family. NifS/IscS subfamily. Homodimer. Forms a heterotetramer with IscU, interacts with other sulfur acceptors. Pyridoxal 5'-phosphate serves as cofactor.

Its subcellular location is the cytoplasm. The catalysed reaction is (sulfur carrier)-H + L-cysteine = (sulfur carrier)-SH + L-alanine. It functions in the pathway cofactor biosynthesis; iron-sulfur cluster biosynthesis. In terms of biological role, master enzyme that delivers sulfur to a number of partners involved in Fe-S cluster assembly, tRNA modification or cofactor biosynthesis. Catalyzes the removal of elemental sulfur atoms from cysteine to produce alanine. Functions as a sulfur delivery protein for Fe-S cluster synthesis onto IscU, an Fe-S scaffold assembly protein, as well as other S acceptor proteins. This chain is Cysteine desulfurase IscS, found in Colwellia psychrerythraea (strain 34H / ATCC BAA-681) (Vibrio psychroerythus).